A 328-amino-acid chain; its full sequence is Malate dehydrogenase (328 aa).

NAD(+) is bound at residue 16–22; sequence GAAGQIS. Substrate is bound by residues R97 and R103. NAD(+) contacts are provided by residues N110, Q117, and 134–136; that span reads VGN. Substrate-binding residues include N136 and R167. Residue H192 is the Proton acceptor of the active site.

The protein belongs to the LDH/MDH superfamily. MDH type 2 family.

The enzyme catalyses (S)-malate + NAD(+) = oxaloacetate + NADH + H(+). Its function is as follows. Catalyzes the reversible oxidation of malate to oxaloacetate. This chain is Malate dehydrogenase, found in Corynebacterium glutamicum (strain R).